The primary structure comprises 371 residues: Chorismate synthase (371 aa).

Arg48 and Arg54 together coordinate NADP(+). Residues 131 to 133, 245 to 246, Gly290, 305 to 309, and Arg331 contribute to the FMN site; these read RSS, NA, and KPTSS.

Belongs to the chorismate synthase family. In terms of assembly, homotetramer. It depends on FMNH2 as a cofactor.

It carries out the reaction 5-O-(1-carboxyvinyl)-3-phosphoshikimate = chorismate + phosphate. The protein operates within metabolic intermediate biosynthesis; chorismate biosynthesis; chorismate from D-erythrose 4-phosphate and phosphoenolpyruvate: step 7/7. Catalyzes the anti-1,4-elimination of the C-3 phosphate and the C-6 proR hydrogen from 5-enolpyruvylshikimate-3-phosphate (EPSP) to yield chorismate, which is the branch point compound that serves as the starting substrate for the three terminal pathways of aromatic amino acid biosynthesis. This reaction introduces a second double bond into the aromatic ring system. This is Chorismate synthase from Mesorhizobium japonicum (strain LMG 29417 / CECT 9101 / MAFF 303099) (Mesorhizobium loti (strain MAFF 303099)).